Here is a 367-residue protein sequence, read N- to C-terminus: Glutamate 5-kinase (367 aa).

Lysine 10 lines the ATP pocket. The substrate site is built by serine 50, aspartate 137, and asparagine 149. ATP contacts are provided by residues 169-170 and 211-217; these read TD and TGGMSTK. Residues 275–353 enclose the PUA domain; it reads AGEITVDEGA…QEIDAILGYE (79 aa).

Belongs to the glutamate 5-kinase family.

Its subcellular location is the cytoplasm. The enzyme catalyses L-glutamate + ATP = L-glutamyl 5-phosphate + ADP. The protein operates within amino-acid biosynthesis; L-proline biosynthesis; L-glutamate 5-semialdehyde from L-glutamate: step 1/2. In terms of biological role, catalyzes the transfer of a phosphate group to glutamate to form L-glutamate 5-phosphate. This chain is Glutamate 5-kinase, found in Escherichia fergusonii (strain ATCC 35469 / DSM 13698 / CCUG 18766 / IAM 14443 / JCM 21226 / LMG 7866 / NBRC 102419 / NCTC 12128 / CDC 0568-73).